The primary structure comprises 415 residues: Na(+)-translocating NADH-quinone reductase subunit B (415 aa).

Transmembrane regions (helical) follow at residues 23–40 (WFALYEAAATLFYTPGLV), 56–76 (IMIMVWLAVFPAMFWGMYNAG), 129–149 (FLPIYATVFIVGGFWEVLFCM), and 164–184 (ILFALIVPPTLPLWQAALGIT). Thr236 carries the FMN phosphoryl threonine modification. Helical transmembrane passes span 275 to 295 (VSTLALMIGAAFIVYMGIASW), 297 to 317 (IIGGVMIGMILLSTLFNVIGS), 325 to 345 (MPWHWHLVLGGFAFGMFFMAT), 358 to 378 (WAYGILIGVMCVLIRVVNPAY), and 381 to 401 (GMMLAILFANLFAPLFDHVVV).

This sequence belongs to the NqrB/RnfD family. In terms of assembly, composed of six subunits; NqrA, NqrB, NqrC, NqrD, NqrE and NqrF. The cofactor is riboflavin. It depends on FMN as a cofactor.

Its subcellular location is the cell inner membrane. It carries out the reaction a ubiquinone + n Na(+)(in) + NADH + H(+) = a ubiquinol + n Na(+)(out) + NAD(+). Its function is as follows. NQR complex catalyzes the reduction of ubiquinone-1 to ubiquinol by two successive reactions, coupled with the transport of Na(+) ions from the cytoplasm to the periplasm. NqrA to NqrE are probably involved in the second step, the conversion of ubisemiquinone to ubiquinol. This Vibrio cholerae serotype O1 (strain ATCC 39541 / Classical Ogawa 395 / O395) protein is Na(+)-translocating NADH-quinone reductase subunit B.